Here is a 100-residue protein sequence, read N- to C-terminus: MTRTRTVKKEKISVASEIDRVEERKLQCKNSLERAEFRKRKQQLSDDDRLALEDEMTILNERVEKYEKDLQVLRGENRRNMMLSVALLAISALFYYTFIY.

Residues 14 to 81 (VASEIDRVEE…VLRGENRRNM (68 aa)) are a coiled coil. The chain crosses the membrane as a helical span at residues 82 to 99 (MLSVALLAISALFYYTFI).

Its subcellular location is the membrane. The chain is Coiled-coil domain-containing protein 167 (ccdc167) from Danio rerio (Zebrafish).